Reading from the N-terminus, the 320-residue chain is Serpentine receptor class gamma-15 (320 aa).

7 helical membrane-spanning segments follow: residues 29–49 (TISY…TILV), 57–77 (GSSF…IVFI), 85–105 (FLYV…SSLI), 151–171 (VSLV…IISP), 197–217 (LFQS…TSVT), 240–260 (IYIS…AFCT), and 268–288 (LFTA…VILF).

Belongs to the nematode receptor-like protein srg family.

The protein localises to the membrane. This is Serpentine receptor class gamma-15 (srg-15) from Caenorhabditis elegans.